The following is a 132-amino-acid chain: Transthyretin-like protein 16 (132 aa).

A signal peptide spans 1–19; sequence MRSLVVCLLLAACALECTA. The N-linked (GlcNAc...) asparagine glycan is linked to asparagine 23.

It belongs to the nematode transthyretin-like family.

The protein localises to the secreted. This chain is Transthyretin-like protein 16 (ttr-16), found in Caenorhabditis elegans.